The sequence spans 400 residues: Phosphoglycerate kinase (400 aa).

Substrate is bound by residues 21 to 23 (DFN), Arg36, 59 to 62 (HCSR), Arg118, and Arg151. Residues Lys201, Glu323, and 353–356 (GGDT) contribute to the ATP site.

It belongs to the phosphoglycerate kinase family. As to quaternary structure, monomer.

It is found in the cytoplasm. It carries out the reaction (2R)-3-phosphoglycerate + ATP = (2R)-3-phospho-glyceroyl phosphate + ADP. The protein operates within carbohydrate degradation; glycolysis; pyruvate from D-glyceraldehyde 3-phosphate: step 2/5. The polypeptide is Phosphoglycerate kinase (Bartonella bacilliformis (strain ATCC 35685 / KC583 / Herrer 020/F12,63)).